Here is a 115-residue protein sequence, read N- to C-terminus: Fluoride-specific ion channel FluC 4 (115 aa).

Helical transmembrane passes span 19–39 (WGTF…AGLG) and 42–62 (LGGI…LLGG). The Na(+) site is built by G61 and T64. A helical membrane pass occupies residues 89–109 (IVASALLCVLAVAAGYGGIMW).

It belongs to the fluoride channel Fluc/FEX (TC 1.A.43) family.

Its subcellular location is the cell inner membrane. It carries out the reaction fluoride(in) = fluoride(out). Na(+) is not transported, but it plays an essential structural role and its presence is essential for fluoride channel function. Functionally, fluoride-specific ion channel. Important for reducing fluoride concentration in the cell, thus reducing its toxicity. This Brucella melitensis biotype 1 (strain ATCC 23456 / CCUG 17765 / NCTC 10094 / 16M) protein is Fluoride-specific ion channel FluC 4.